Consider the following 180-residue polypeptide: Ribosome rescue factor SmrB (180 aa).

The Smr domain maps to 98–173 (LDLHGLTQLQ…GNAALLVLVA (76 aa)).

It belongs to the SmrB family. In terms of assembly, associates with collided ribosomes, but not with correctly translating polysomes.

In terms of biological role, acts as a ribosome collision sensor. Detects stalled/collided disomes (pairs of ribosomes where the leading ribosome is stalled and a second ribosome has collided with it) and endonucleolytically cleaves mRNA at the 5' boundary of the stalled ribosome. Stalled/collided disomes form a new interface (primarily via the 30S subunits) that binds SmrB. Cleaved mRNA becomes available for tmRNA ligation, leading to ribosomal subunit dissociation and rescue of stalled ribosomes. In Pectobacterium atrosepticum (strain SCRI 1043 / ATCC BAA-672) (Erwinia carotovora subsp. atroseptica), this protein is Ribosome rescue factor SmrB.